Consider the following 160-residue polypeptide: UPF0479 membrane protein YER190C-B (160 aa).

2 helical membrane-spanning segments follow: residues isoleucine 39–glutamine 59 and valine 136–histidine 156.

Belongs to the UPF0479 family.

The protein localises to the membrane. In Saccharomyces cerevisiae (strain ATCC 204508 / S288c) (Baker's yeast), this protein is UPF0479 membrane protein YER190C-B.